Here is a 1650-residue protein sequence, read N- to C-terminus: Transmembrane domain-containing protein DDB_G0287209 (1650 aa).

Residues 194 to 225 (NNNNNNFNNNNNNNNNNNNNKNNYNNNKSNLI) are a coiled coil. 2 disordered regions span residues 197–216 (NNNF…NKNN) and 1218–1296 (ENQF…NINN). Over residues 1224 to 1284 (NNNENSGSSG…SNSNENNYNG (61 aa)) the composition is skewed to low complexity. 9 consecutive transmembrane segments (helical) span residues 1314-1334 (PLLL…LSLF), 1347-1369 (ILFL…LQLF), 1390-1410 (ISIS…DVTS), 1454-1474 (WNIY…LIVP), 1489-1509 (ILFI…VILF), 1515-1535 (WWDL…VTLL), 1539-1559 (PVYF…QFAF), 1570-1590 (VENL…TSII), and 1595-1615 (FNLI…ITII).

The protein localises to the membrane. In Dictyostelium discoideum (Social amoeba), this protein is Transmembrane domain-containing protein DDB_G0287209.